The chain runs to 241 residues: Lysoplasmalogenase TMEM86A (241 aa).

The Cytoplasmic portion of the chain corresponds to 1 to 13; the sequence is MVSPVTVVKSEGP. A helical membrane pass occupies residues 14-30; the sequence is KLVPFFKATCVYFVLWL. At 31–36 the chain is on the extracellular side; the sequence is PSSSPS. The helical transmembrane segment at 37 to 59 threads the bilayer; sequence WVSALIKCLPIFCLWLFLLAHGV. Residues 60–67 are Cytoplasmic-facing; sequence RFLLAHPS. Residues 68–87 form a helical membrane-spanning segment; sequence ASLIFVGLVFSAVGDAFLIW. The Extracellular portion of the chain corresponds to 88 to 96; that stretch reads QDHGYFEHG. Residues 97–113 traverse the membrane as a helical segment; that stretch reads LLMFAVAHILYAAAFGM. Residues 114 to 119 are Cytoplasmic-facing; it reads RPLALR. The helical transmembrane segment at 120–136 threads the bilayer; it reads TGLVIGVLSGLCYALLY. Topologically, residues 137–142 are extracellular; that stretch reads PGLSGA. The helical transmembrane segment at 143 to 159 threads the bilayer; it reads FTYLVGVYVALISFMGW. Topologically, residues 160 to 176 are cytoplasmic; the sequence is RAMAGLRLVGAAWRWTE. A helical membrane pass occupies residues 177-195; the sequence is LAAGGGALLFILSDLTIAL. The Extracellular portion of the chain corresponds to 196–206; it reads NKFCFPVPYSR. Residues 207–225 form a helical membrane-spanning segment; it reads ALIMSTYYAAQMLIALSAV. Topologically, residues 226–241 are cytoplasmic; that stretch reads ESREPVGEDYRLSKAD.

Belongs to the TMEM86 family. As to expression, highly expressed in the jejunum, white adipose tissue, kidney and macrophages.

It localises to the endoplasmic reticulum membrane. It carries out the reaction a 1-O-(1Z-alkenyl)-sn-glycero-3-phosphocholine + H2O = a 2,3-saturated aldehyde + sn-glycerol 3-phosphocholine. The catalysed reaction is a 1-O-(1Z-alkenyl)-sn-glycero-3-phosphoethanolamine + H2O = a 2,3-saturated aldehyde + sn-glycero-3-phosphoethanolamine. Functionally, catalyzes the hydrolysis of the vinyl ether bond of choline or ethanolamine lysoplasmalogens, forming fatty aldehyde and glycerophosphocholine or glycerophosphoethanolamine, respectively and is specific for the sn-2-deacylated (lyso) form of plasmalogen. Plays an important role in lysoplasmalogen metabolism in the adipocyte tissue and macrophages. The chain is Lysoplasmalogenase TMEM86A (Tmem86a) from Mus musculus (Mouse).